A 638-amino-acid polypeptide reads, in one-letter code: ATP-dependent zinc metalloprotease FtsH (638 aa).

The Cytoplasmic portion of the chain corresponds to Met-1–Thr-7. The helical transmembrane segment at Ile-8–Gly-28 threads the bilayer. At Asn-29–Leu-102 the chain is on the periplasmic side. A helical membrane pass occupies residues Trp-103–Phe-123. Topologically, residues Met-124–Ala-638 are cytoplasmic. Residue Gly-195 to Thr-202 participates in ATP binding. His-417 is a binding site for Zn(2+). Glu-418 is a catalytic residue. Residues His-421 and Asp-493 each coordinate Zn(2+). The interval Gly-596 to Ala-638 is disordered. Basic and acidic residues predominate over residues Ala-614–Asp-625.

The protein in the central section; belongs to the AAA ATPase family. This sequence in the C-terminal section; belongs to the peptidase M41 family. Homohexamer. Zn(2+) serves as cofactor.

The protein resides in the cell inner membrane. Functionally, acts as a processive, ATP-dependent zinc metallopeptidase for both cytoplasmic and membrane proteins. Plays a role in the quality control of integral membrane proteins. This Myxococcus xanthus (strain DK1622) protein is ATP-dependent zinc metalloprotease FtsH.